A 460-amino-acid polypeptide reads, in one-letter code: Inactive 7-epi-sesquithujene synthase (460 aa).

Positions 308 and 312 each coordinate Mg(2+). The substrate site is built by D308 and D312. A DDXXD motif motif is present at residues 308 to 312; sequence DDMFD.

The protein belongs to the terpene synthase family. In terms of assembly, monomer. The cofactor is Mg(2+). Mn(2+) serves as cofactor.

It localises to the cytoplasm. It functions in the pathway secondary metabolite biosynthesis; terpenoid biosynthesis. Its function is as follows. Non-functional sesquiterpene synthase due to a frameshift removing part of the catalytic site. In Zea mays (Maize), this protein is Inactive 7-epi-sesquithujene synthase.